Consider the following 262-residue polypeptide: Ribosomal RNA small subunit methyltransferase G (262 aa).

3 residues coordinate S-adenosyl-L-methionine: Gly-72, Leu-77, and Arg-142. The tract at residues 212 to 262 is disordered; it reads RSSQLSRAEGRKGRGDGERHDGRQVRRTARDSRRSREVDRDQPTRGQSRST. A compositionally biased stretch (basic and acidic residues) spans 219-254; the sequence is AEGRKGRGDGERHDGRQVRRTARDSRRSREVDRDQP.

The protein belongs to the methyltransferase superfamily. RNA methyltransferase RsmG family.

It localises to the cytoplasm. Its function is as follows. Specifically methylates the N7 position of guanine in position 518 of 16S rRNA. This is Ribosomal RNA small subunit methyltransferase G from Frankia alni (strain DSM 45986 / CECT 9034 / ACN14a).